The following is a 257-amino-acid chain: Acetylglutamate kinase (257 aa).

Residues 43–44 (GG), Arg-65, and Asn-157 each bind substrate. ATP-binding positions include 180 to 185 (DVSGIL) and 208 to 210 (IIT).

This sequence belongs to the acetylglutamate kinase family. ArgB subfamily. As to quaternary structure, homodimer.

The protein localises to the cytoplasm. It carries out the reaction N-acetyl-L-glutamate + ATP = N-acetyl-L-glutamyl 5-phosphate + ADP. The protein operates within amino-acid biosynthesis; L-arginine biosynthesis; N(2)-acetyl-L-ornithine from L-glutamate: step 2/4. Catalyzes the ATP-dependent phosphorylation of N-acetyl-L-glutamate. The sequence is that of Acetylglutamate kinase from Pectobacterium carotovorum subsp. carotovorum (strain PC1).